The chain runs to 234 residues: Purine nucleoside phosphorylase DeoD-type (234 aa).

His4 is a binding site for a purine D-ribonucleoside. Phosphate contacts are provided by residues Gly20, Arg24, Arg43, and Arg87 to Ser90. A purine D-ribonucleoside contacts are provided by residues Glu162, Glu179–Glu181, and Ser203–Asp204. Residue Asp204 is the Proton donor of the active site.

It belongs to the PNP/UDP phosphorylase family. As to quaternary structure, homohexamer; trimer of homodimers.

The catalysed reaction is a purine D-ribonucleoside + phosphate = a purine nucleobase + alpha-D-ribose 1-phosphate. The enzyme catalyses a purine 2'-deoxy-D-ribonucleoside + phosphate = a purine nucleobase + 2-deoxy-alpha-D-ribose 1-phosphate. In terms of biological role, catalyzes the reversible phosphorolytic breakdown of the N-glycosidic bond in the beta-(deoxy)ribonucleoside molecules, with the formation of the corresponding free purine bases and pentose-1-phosphate. The chain is Purine nucleoside phosphorylase DeoD-type from Jannaschia sp. (strain CCS1).